The primary structure comprises 339 residues: MKLAVIDGDGIGVEVTAEALKVLKAVRDDVETTEYDLGARRYLRNGETLTDADLESLKQHDAILLGAIGDPRTVPAGVLERGLLLPLRFKLDHAVNLRPSKLYPGASSPLKNAGEIDFVVVREGTEGLYCGNGGTLREGTDHEVASEVSQNTWFGVERVVRDAFRRAQERRKKLTWVHKTNVLVNAGGLWQRAIETIGKEFPDVEVDYNHIDAATIYMVTDPSRYDVIVTDNLFGDILTDLAGAVTGGIGLAASGNIDPTHNNPSMFEPVHGSAPDIAGQGIADPCAAILSVALMLRHLGDEANAEKIEKAVLDEAAGRDGSPIRTTEVGDRIAAAVQA.

Substrate-binding residues include arginine 88, arginine 98, arginine 122, and aspartate 212. Mg(2+) is bound by residues aspartate 212, aspartate 236, and aspartate 240. 272–284 (GSAPDIAGQGIAD) provides a ligand contact to NAD(+).

Belongs to the isocitrate and isopropylmalate dehydrogenases family. LeuB type 2 subfamily. In terms of assembly, homodimer. The cofactor is Mg(2+). Mn(2+) is required as a cofactor.

Its subcellular location is the cytoplasm. The enzyme catalyses (2R,3S)-3-isopropylmalate + NAD(+) = 4-methyl-2-oxopentanoate + CO2 + NADH. It participates in amino-acid biosynthesis; L-leucine biosynthesis; L-leucine from 3-methyl-2-oxobutanoate: step 3/4. Catalyzes the oxidation of 3-carboxy-2-hydroxy-4-methylpentanoate (3-isopropylmalate) to 3-carboxy-4-methyl-2-oxopentanoate. The product decarboxylates to 4-methyl-2 oxopentanoate. The protein is 3-isopropylmalate dehydrogenase of Corynebacterium urealyticum (strain ATCC 43042 / DSM 7109).